A 500-amino-acid chain; its full sequence is Probable malate:quinone oxidoreductase (500 aa).

It belongs to the MQO family. Requires FAD as cofactor.

The enzyme catalyses (S)-malate + a quinone = a quinol + oxaloacetate. Its pathway is carbohydrate metabolism; tricarboxylic acid cycle; oxaloacetate from (S)-malate (quinone route): step 1/1. The protein is Probable malate:quinone oxidoreductase of Halalkalibacterium halodurans (strain ATCC BAA-125 / DSM 18197 / FERM 7344 / JCM 9153 / C-125) (Bacillus halodurans).